The sequence spans 588 residues: Neopullulanase (588 aa).

Ca(2+)-binding residues include Asn-147, Asn-149, Ser-153, Gly-172, and Asp-174. Substrate contacts are provided by His-247 and Arg-326. Catalysis depends on Asp-328, which acts as the Nucleophile. The active-site Proton donor is the Glu-357. Residues 423-424 (HD), Asp-468, and Arg-472 contribute to the substrate site.

The protein belongs to the glycosyl hydrolase 13 family. Homodimer. It depends on Ca(2+) as a cofactor.

It catalyses the reaction Hydrolysis of pullulan to panose (6-alpha-D-glucosylmaltose).. Functionally, hydrolyzes pullulan efficiently but only a small amount of starch. Endohydrolysis of 1,4-alpha-glucosidic linkages in pullulan to form panose. Also cleaves (1-6)-alpha-glucosidic linkages to form maltotriose. This chain is Neopullulanase (nplT), found in Geobacillus stearothermophilus (Bacillus stearothermophilus).